The following is a 74-amino-acid chain: UPF0435 protein Bcer98_0391 (74 aa).

The protein belongs to the UPF0435 family.

The sequence is that of UPF0435 protein Bcer98_0391 from Bacillus cytotoxicus (strain DSM 22905 / CIP 110041 / 391-98 / NVH 391-98).